Consider the following 133-residue polypeptide: Small ribosomal subunit protein uS8 (133 aa).

This sequence belongs to the universal ribosomal protein uS8 family. In terms of assembly, part of the 30S ribosomal subunit. Contacts proteins S5 and S12.

Functionally, one of the primary rRNA binding proteins, it binds directly to 16S rRNA central domain where it helps coordinate assembly of the platform of the 30S subunit. This is Small ribosomal subunit protein uS8 from Deinococcus geothermalis (strain DSM 11300 / CIP 105573 / AG-3a).